Reading from the N-terminus, the 340-residue chain is Integral membrane protein SED5 (340 aa).

The Cytoplasmic segment spans residues M1–R319. The interval R31–V51 is disordered. Positions N39 to V51 are enriched in polar residues. A coiled-coil region spans residues L146–D173. Residues T180–F231 are disordered. Polar residues predominate over residues D189–M209. In terms of domain architecture, t-SNARE coiled-coil homology spans N249–Y311. Residues W320–N340 form a helical; Anchor for type IV membrane protein membrane-spanning segment.

This sequence belongs to the syntaxin family. In terms of assembly, interacts with SLY1, STF1, SFB3 and GOS1.

The protein localises to the membrane. It localises to the golgi apparatus membrane. Required for vesicular transport between the endoplasmic reticulum and the Golgi complex. Acts as a target organelle soluble NSF attachment protein receptor (t-SNARE). The chain is Integral membrane protein SED5 (SED5) from Saccharomyces cerevisiae (strain ATCC 204508 / S288c) (Baker's yeast).